Here is a 30-residue protein sequence, read N- to C-terminus: Truncated interleukin-1-binding protein (30 aa).

The signal sequence occupies residues 1–18; the sequence is MSILPVIFLPIFFYSSFV.

This sequence belongs to the interleukin-1 receptor family.

This is Truncated interleukin-1-binding protein from Vaccinia virus (strain Copenhagen) (VACV).